Reading from the N-terminus, the 254-residue chain is Probable phosphomannomutase (254 aa).

Asp-14 (nucleophile) is an active-site residue. Mg(2+)-binding residues include Asp-14 and Asp-16. The active-site Proton donor/acceptor is the Asp-16. Alpha-D-mannose 1-phosphate contacts are provided by Arg-23, Arg-129, Arg-140, Arg-147, Ser-185, and Asp-187. The Mg(2+) site is built by Asp-214, Phe-226, Asp-228, and Thr-231.

The protein belongs to the eukaryotic PMM family. In terms of assembly, homodimer.

Its subcellular location is the cytoplasm. The enzyme catalyses alpha-D-mannose 1-phosphate = D-mannose 6-phosphate. Its pathway is nucleotide-sugar biosynthesis; GDP-alpha-D-mannose biosynthesis; alpha-D-mannose 1-phosphate from D-fructose 6-phosphate: step 2/2. Involved in the synthesis of the GDP-mannose and dolichol-phosphate-mannose required for a number of critical mannosyl transfer reactions. The protein is Probable phosphomannomutase of Caenorhabditis elegans.